The primary structure comprises 517 residues: MANADLSNFDKIIVLDFGSQYNQLITRRIREFGIYSELLSHKITAEEIKKINPKGIIFSGGPNSVYDKDAFRIDPEIYKLGIPILGICYGMQLMTYNLGGRVEPADNREYGHADIDVTDDQAVMFKELPAKQTVWMSHGDLVREVPEGFKTVATSANCPIASMADDARKFYGVQFHAEVRNTQYGNEILRHFAFDVCEAKANWSMNDFIDMQVQQIRETVGDRKVLLGLSGGVDSSVVGVLLNKAIGDQLVCIFVDHGLLRKGEAKQVMDSLEGKFGLNIIKVDAQDRFLSKLAGVSEPEQKRKIIGNEFIQVFNDEAQKLKGIDFLAQGTLYTDVIESGTDTAQTIKSHHNVGGLPEDMHFELIEPLRTLFKDEARDLGEKLGMPEDLVWRQPFPGPGLGIRVIGEITEDKLQIVRDSDLILREEIKKAGLDRDIWQYFTVLPGIRSVGVMGDGRTYDYTVGIRAVNSIDGMTADFARIPWDVLQKISVRIVNEVDHVNRIVYDITSKPPATVEWE.

The region spanning 11 to 202 is the Glutamine amidotransferase type-1 domain; sequence KIIVLDFGSQ…AFDVCEAKAN (192 aa). Cysteine 88 acts as the Nucleophile in catalysis. Catalysis depends on residues histidine 176 and glutamate 178. In terms of domain architecture, GMPS ATP-PPase spans 203-392; the sequence is WSMNDFIDMQ…LGMPEDLVWR (190 aa). 230–236 contributes to the ATP binding site; that stretch reads SGGVDSS.

As to quaternary structure, homodimer.

The enzyme catalyses XMP + L-glutamine + ATP + H2O = GMP + L-glutamate + AMP + diphosphate + 2 H(+). Its pathway is purine metabolism; GMP biosynthesis; GMP from XMP (L-Gln route): step 1/1. Its function is as follows. Catalyzes the synthesis of GMP from XMP. The chain is GMP synthase [glutamine-hydrolyzing] from Pediococcus pentosaceus (strain ATCC 25745 / CCUG 21536 / LMG 10740 / 183-1w).